A 418-amino-acid polypeptide reads, in one-letter code: MAP kinase-interacting serine/threonine-protein kinase 1 (418 aa).

The segment at 1-23 (MVSSQPVPFDDGGKRRKKKRKTR) is disordered. The 285-residue stretch at 37 to 321 (RLTDELLGEG…AFQVLQHPWL (285 aa)) folds into the Protein kinase domain. ATP contacts are provided by residues 43-51 (LGEGAYAKV) and Lys-66. Catalysis depends on Asp-158, which acts as the Proton acceptor. The segment at 384-418 (PPSKSRLAKRRAQAHARKGGSHPTHSTVTASQGTP) is disordered. The span at 389–403 (RLAKRRAQAHARKGG) shows a compositional bias: basic residues. Polar residues predominate over residues 406-418 (PTHSTVTASQGTP).

Belongs to the protein kinase superfamily. CAMK Ser/Thr protein kinase family. Mg(2+) is required as a cofactor.

It carries out the reaction L-seryl-[protein] + ATP = O-phospho-L-seryl-[protein] + ADP + H(+). The catalysed reaction is L-threonyl-[protein] + ATP = O-phospho-L-threonyl-[protein] + ADP + H(+). May play a role in the response to environmental stress and cytokines. Appears to regulate translation by phosphorylating EIF4E, thus increasing the affinity of this protein for the 7-methylguanosine-containing mRNA cap. The protein is MAP kinase-interacting serine/threonine-protein kinase 1 (mknk1) of Xenopus laevis (African clawed frog).